The following is a 329-amino-acid chain: Trem-like transcript 2 protein (329 aa).

An N-terminal signal peptide occupies residues 1-24; sequence MEPWPLTFLLLLLLLLWLQGCVSG. The Ig-like V-type domain maps to 25 to 126; it reads HSNENLYRKV…HFYPLVGFQL (102 aa). Residues 25–270 lie on the Extracellular side of the membrane; the sequence is HSNENLYRKV…NRSQETYIPA (246 aa). 2 disulfide bridges follow: Cys-46–Cys-110 and Cys-61–Cys-68. Residues 202 to 259 form a disordered region; sequence FIDTSGTVTEPERNTESQPATLSPSNARSFSADPVTTSTMSRHQSSSLSTTGTCHPLT. Residues 217 to 259 show a composition bias toward polar residues; it reads ESQPATLSPSNARSFSADPVTTSTMSRHQSSSLSTTGTCHPLT. The N-linked (GlcNAc...) asparagine glycan is linked to Asn-261. The chain crosses the membrane as a helical span at residues 271-291; sequence MVVVLTFLPAPVVLVVAYGFW. Topologically, residues 292–329 are cytoplasmic; the sequence is KKRHMGRYNLGSNYAKPWIHLPEGPETPWKPAWSKITQ.

As to quaternary structure, interacts with CD276 and this interaction enhances T-cell activation. In terms of tissue distribution, detected in B-lymphocytes and macrophages. Detected in spleen, lymph nodes, blood, bone marrow and cells from the peritoneal cavity (at protein level).

It is found in the cell membrane. Functionally, cell surface receptor that may play a role in the innate and adaptive immune response. Acts as a counter-receptor for CD276 and interaction with CD276 on T-cells enhances T-cell activation. This is Trem-like transcript 2 protein (Treml2) from Mus musculus (Mouse).